Reading from the N-terminus, the 421-residue chain is Serine hydroxymethyltransferase (421 aa).

Residues Leu121 and 125–127 contribute to the (6S)-5,6,7,8-tetrahydrofolate site; that span reads GHL. The residue at position 230 (Lys230) is an N6-(pyridoxal phosphate)lysine.

This sequence belongs to the SHMT family. In terms of assembly, homodimer. It depends on pyridoxal 5'-phosphate as a cofactor.

The protein resides in the cytoplasm. It catalyses the reaction (6R)-5,10-methylene-5,6,7,8-tetrahydrofolate + glycine + H2O = (6S)-5,6,7,8-tetrahydrofolate + L-serine. Its pathway is one-carbon metabolism; tetrahydrofolate interconversion. It functions in the pathway amino-acid biosynthesis; glycine biosynthesis; glycine from L-serine: step 1/1. Catalyzes the reversible interconversion of serine and glycine with tetrahydrofolate (THF) serving as the one-carbon carrier. This reaction serves as the major source of one-carbon groups required for the biosynthesis of purines, thymidylate, methionine, and other important biomolecules. Also exhibits THF-independent aldolase activity toward beta-hydroxyamino acids, producing glycine and aldehydes, via a retro-aldol mechanism. This is Serine hydroxymethyltransferase from Carboxydothermus hydrogenoformans (strain ATCC BAA-161 / DSM 6008 / Z-2901).